The sequence spans 290 residues: Pyridoxal kinase PdxY (290 aa).

Residues S12 and 47 to 48 contribute to the substrate site; that span reads TQ. Residues D114, E151, K184, and 211-214 contribute to the ATP site; that span reads RPLL. D225 provides a ligand contact to substrate.

The protein belongs to the pyridoxine kinase family. PdxY subfamily. In terms of assembly, homodimer. It depends on Mg(2+) as a cofactor.

It carries out the reaction pyridoxal + ATP = pyridoxal 5'-phosphate + ADP + H(+). The protein operates within cofactor metabolism; pyridoxal 5'-phosphate salvage; pyridoxal 5'-phosphate from pyridoxal: step 1/1. Functionally, pyridoxal kinase involved in the salvage pathway of pyridoxal 5'-phosphate (PLP). Catalyzes the phosphorylation of pyridoxal to PLP. The protein is Pyridoxal kinase PdxY of Pseudomonas putida (strain W619).